The following is a 509-amino-acid chain: Zinc finger protein Aiolos (509 aa).

The segment covering 1–19 (MEDIQTNAELKSTQEQSVP) has biased composition (polar residues). The segment at 1-86 (MEDIQTNAEL…MGNAEEPEIP (86 aa)) is disordered. Residues serine 22 and serine 42 each carry the phosphoserine modification. The segment covering 56–72 (DSMKVKDEYSERDENVL) has biased composition (basic and acidic residues). Residues lysine 61, lysine 73, and lysine 100 each participate in a glycyl lysine isopeptide (Lys-Gly) (interchain with G-Cter in SUMO2) cross-link. 3 C2H2-type zinc fingers span residues 118–140 (MNCD…KRSH), 146–168 (FQCN…IKLH), and 174–196 (FKCH…LRTH). The segment at 202 to 224 (YKCEFCGRSYKQRSSLEEHKERC) adopts a C2H2-type 4; atypical zinc-finger fold. Lysine 245 is covalently cross-linked (Glycyl lysine isopeptide (Lys-Gly) (interchain with G-Cter in SUMO2)). Threonine 326 carries the post-translational modification Phosphothreonine. Residues 364–394 (IHLPEKSVPSERGLSPNNSGHDSTDTDSNHE) form a disordered region. At serine 378 the chain carries Phosphoserine. The span at 385–394 (DSTDTDSNHE) shows a compositional bias: basic and acidic residues. The C2H2-type 5 zinc-finger motif lies at 452–474 (YRCDHCRVLFLDYVMFTIHMGCH). The interval 452-504 (YRCDHCRVLFLDYVMFTIHMGCHGFRDPFECNMCGYRSHDRYEFSSHIARGEH) is mediates homodimerization and heterodimerization. The C2H2-type 6; atypical zinc-finger motif lies at 480–504 (FECNMCGYRSHDRYEFSSHIARGEH).

This sequence belongs to the Ikaros C2H2-type zinc-finger protein family. As to quaternary structure, homodimer. Heterodimer with other IKAROS family members. Interacts with IKZF4 and IKZF5. Interacts with IKZF1. Interacts with HRAS. Interacts with FOXP3; this interaction may be required for silencing target genes and regulating the suppressive activity of FOXP3-positive regulatory T-cells (Treg). Interacts with BCL21L isoform Bcl-X(L); this interaction blocks the anti-apoptotic role of BCL21L. Associates with histone deacetylase complexes containing HDAC1, MTA2 and SIN3A. Phosphorylation on tyrosine residues induced by IL2 is required for dissociation from HRAS and nuclear translocation of IKZF3 in T-cells. Phosphorylation on tyrosine residues induced by IL4 is required for dissociation from Bcl-X(L) in T-cells. In terms of tissue distribution, expressed most strongly in peripheral blood leukocytes, the spleen, and the thymus.

Its subcellular location is the nucleus. The protein localises to the cytoplasm. In terms of biological role, transcription factor that plays an important role in the regulation of lymphocyte differentiation. Plays an essential role in regulation of B-cell differentiation, proliferation and maturation to an effector state. Involved in regulating BCL2 expression and controlling apoptosis in T-cells in an IL2-dependent manner. The polypeptide is Zinc finger protein Aiolos (IKZF3) (Homo sapiens (Human)).